A 141-amino-acid polypeptide reads, in one-letter code: Large ribosomal subunit protein uL11 (141 aa).

It belongs to the universal ribosomal protein uL11 family. Part of the ribosomal stalk of the 50S ribosomal subunit. Interacts with L10 and the large rRNA to form the base of the stalk. L10 forms an elongated spine to which L12 dimers bind in a sequential fashion forming a multimeric L10(L12)X complex. One or more lysine residues are methylated.

In terms of biological role, forms part of the ribosomal stalk which helps the ribosome interact with GTP-bound translation factors. This is Large ribosomal subunit protein uL11 from Chlorobium phaeovibrioides (strain DSM 265 / 1930) (Prosthecochloris vibrioformis (strain DSM 265)).